The primary structure comprises 329 residues: Vitamin B12 import system permease protein BtuC (329 aa).

9 consecutive transmembrane segments (helical) span residues 22–42, 64–84, 91–111, 115–135, 149–169, 187–207, 243–263, 277–297, and 305–325; these read LSVLMLLAVVLSLCAGDQWIA, LAVLLVGAALALSGAVMQALF, PGLLGVSNGAGVGLIAAVLLG, LPGWALGFCAIAGALIITLIL, LLAGVALGIICSAMMTWAIYF, GGVDWQQAWLMIALIPVSLWI, GWMVGVSVALAGSIGFIGLVI, ALLPGCALAGAIALLLADVIA, and ELPIGVVTATMGAPVFIWLLL.

It belongs to the binding-protein-dependent transport system permease family. FecCD subfamily. The complex is composed of two ATP-binding proteins (BtuD), two transmembrane proteins (BtuC) and a solute-binding protein (BtuF).

Its subcellular location is the cell inner membrane. In terms of biological role, part of the ABC transporter complex BtuCDF involved in vitamin B12 import. Involved in the translocation of the substrate across the membrane. The chain is Vitamin B12 import system permease protein BtuC from Citrobacter koseri (strain ATCC BAA-895 / CDC 4225-83 / SGSC4696).